The sequence spans 243 residues: tRNA (guanine-N(1)-)-methyltransferase (243 aa).

S-adenosyl-L-methionine is bound by residues Gly-112 and 131–136; that span reads LGDYVL.

The protein belongs to the RNA methyltransferase TrmD family. As to quaternary structure, homodimer.

Its subcellular location is the cytoplasm. The enzyme catalyses guanosine(37) in tRNA + S-adenosyl-L-methionine = N(1)-methylguanosine(37) in tRNA + S-adenosyl-L-homocysteine + H(+). Functionally, specifically methylates guanosine-37 in various tRNAs. In Leuconostoc mesenteroides subsp. mesenteroides (strain ATCC 8293 / DSM 20343 / BCRC 11652 / CCM 1803 / JCM 6124 / NCDO 523 / NBRC 100496 / NCIMB 8023 / NCTC 12954 / NRRL B-1118 / 37Y), this protein is tRNA (guanine-N(1)-)-methyltransferase.